We begin with the raw amino-acid sequence, 527 residues long: Type 2 DNA topoisomerase 6 subunit B (527 aa).

Residues Asn-39, Asp-73, 94 to 95 (SK), 103 to 110 (GVFGLGLK), and Lys-421 each bind ATP.

This sequence belongs to the TOP6B family. Homodimer. Heterotetramer of two Top6A and two Top6B chains.

The catalysed reaction is ATP-dependent breakage, passage and rejoining of double-stranded DNA.. Relaxes both positive and negative superturns and exhibits a strong decatenase activity. This Pyrobaculum aerophilum (strain ATCC 51768 / DSM 7523 / JCM 9630 / CIP 104966 / NBRC 100827 / IM2) protein is Type 2 DNA topoisomerase 6 subunit B.